The sequence spans 113 residues: rRNA-processing protein cgrA (113 aa).

A compositionally biased stretch (polar residues) spans 1 to 15 (MSTITTSSVASSNGM). The tract at residues 1–113 (MSTITTSSVA…REKRNKLLHS (113 aa)) is disordered. Residues 37-100 (SYEKRLEARK…EKMHRKRVER (64 aa)) are a coiled coil. Residues 38–92 (YEKRLEARKLQEAVKEHEREMREEREAERKAQIQKIKDRRAAKEEKERYEKMAEK) show a composition bias toward basic and acidic residues. Residues 93–113 (MHRKRVERLKRREKRNKLLHS) are compositionally biased toward basic residues.

This sequence belongs to the CGR1 family.

Its subcellular location is the nucleus. It localises to the nucleolus. Involved in nucleolar integrity and required for processing of the pre-rRNA for the 60S ribosome subunit. The polypeptide is rRNA-processing protein cgrA (cgrA) (Aspergillus clavatus (strain ATCC 1007 / CBS 513.65 / DSM 816 / NCTC 3887 / NRRL 1 / QM 1276 / 107)).